Reading from the N-terminus, the 445-residue chain is Tubulin beta-2 chain (445 aa).

The MREI motif motif lies at 1–4 (MREI). 8 residues coordinate GTP: Gln-11, Glu-69, Ser-138, Gly-142, Thr-143, Gly-144, Asn-204, and Asn-226. Glu-69 is a Mg(2+) binding site. Residues 424–445 (QYQDATADEQGEFEEEGEEDEA) form a disordered region. Positions 429 to 445 (TADEQGEFEEEGEEDEA) are enriched in acidic residues. Residue Glu-438 is modified to 5-glutamyl polyglutamate.

It belongs to the tubulin family. As to quaternary structure, dimer of alpha and beta chains. A typical microtubule is a hollow water-filled tube with an outer diameter of 25 nm and an inner diameter of 15 nM. Alpha-beta heterodimers associate head-to-tail to form protofilaments running lengthwise along the microtubule wall with the beta-tubulin subunit facing the microtubule plus end conferring a structural polarity. Microtubules usually have 13 protofilaments but different protofilament numbers can be found in some organisms and specialized cells. Mg(2+) is required as a cofactor. Post-translationally, some glutamate residues at the C-terminus are polyglycylated, resulting in polyglycine chains on the gamma-carboxyl group. Glycylation is mainly limited to tubulin incorporated into axonemes (cilia and flagella) whereas glutamylation is prevalent in neuronal cells, centrioles, axonemes, and the mitotic spindle. Both modifications can coexist on the same protein on adjacent residues, and lowering polyglycylation levels increases polyglutamylation, and reciprocally. The precise function of polyglycylation is still unclear. In terms of processing, some glutamate residues at the C-terminus are polyglutamylated, resulting in polyglutamate chains on the gamma-carboxyl group. Polyglutamylation plays a key role in microtubule severing by spastin (SPAST). SPAST preferentially recognizes and acts on microtubules decorated with short polyglutamate tails: severing activity by SPAST increases as the number of glutamates per tubulin rises from one to eight, but decreases beyond this glutamylation threshold. As to expression, highly expressed in neuronal cells.

It localises to the cytoplasm. Its subcellular location is the cytoskeleton. Functionally, tubulin is the major constituent of microtubules, a cylinder consisting of laterally associated linear protofilaments composed of alpha- and beta-tubulin heterodimers. Microtubules grow by the addition of GTP-tubulin dimers to the microtubule end, where a stabilizing cap forms. Below the cap, tubulin dimers are in GDP-bound state, owing to GTPase activity of alpha-tubulin. This is Tubulin beta-2 chain from Gallus gallus (Chicken).